The chain runs to 187 residues: Ribosome-recycling factor (187 aa).

It belongs to the RRF family.

The protein localises to the cytoplasm. In terms of biological role, responsible for the release of ribosomes from messenger RNA at the termination of protein biosynthesis. May increase the efficiency of translation by recycling ribosomes from one round of translation to another. The sequence is that of Ribosome-recycling factor from Rhodopseudomonas palustris (strain BisB5).